Here is a 153-residue protein sequence, read N- to C-terminus: Pheromone-binding protein Gp-9 (153 aa).

Residues 1–19 form the signal peptide; the sequence is MKTFVLHIFIFALVAFASA. Cystine bridges form between Cys37–Cys77, Cys73–Cys129, and Cys118–Cys138.

It belongs to the PBP/GOBP family. In terms of assembly, homodimer.

It is found in the secreted. Colony queen number, a major feature of social organization, is associated with worker genotype for Gp-9. Colonies are headed by either a single reproductive queen (monogyne form) or multiple queens (polygyne form). Differences in worker Gp-9 genotypes between social forms may cause differences in workers' abilities to recognize queens and regulate their numbers. In Solenopsis saevissima (Fire ant), this protein is Pheromone-binding protein Gp-9.